The primary structure comprises 400 residues: MASLSQLSGHLNYTCGAENSTGASQARPHAYYALSYCALILAIVFGNGLVCMAVLKERALQTTTNYLVVSLAVADLLVATLVMPWVVYLEVTGGVWNFSRICCDVFVTLDVMMCTASILNLCAISIDRYTAVVMPVHYQHGTGQSSCRRVALMITAVWVLAFAVSCPLLFGFNTTGDPTVCSISNPDFVIYSSVVSFYLPFGVTVLVYARIYVVLKQRRRKRILTRQNSQCNSVRPGFPQQTLSPDPAHLELKRYYSICQDTALGGPGFQERGGELKREEKTRNSLSPTIAPKLSLEVRKLSNGRLSTSLKLGPLQPRGVPLREKKATQMVAIVLGAFIVCWLPFFLTHVLNTHCQTCHVSPELYSATTWLGYVNSALNPVIYTTFNIEFRKAFLKILSC.

Residues 1-32 lie on the Extracellular side of the membrane; the sequence is MASLSQLSGHLNYTCGAENSTGASQARPHAYY. N-linked (GlcNAc...) asparagine glycans are attached at residues Asn-12 and Asn-19. Residues 33–55 form a helical membrane-spanning segment; the sequence is ALSYCALILAIVFGNGLVCMAVL. Over 56–65 the chain is Cytoplasmic; the sequence is KERALQTTTN. Residues 66–88 traverse the membrane as a helical segment; it reads YLVVSLAVADLLVATLVMPWVVY. Topologically, residues 89–104 are extracellular; the sequence is LEVTGGVWNFSRICCD. Asn-97 carries N-linked (GlcNAc...) asparagine glycosylation. An intrachain disulfide couples Cys-103 to Cys-181. The chain crosses the membrane as a helical span at residues 105–126; sequence VFVTLDVMMCTASILNLCAISI. Eticlopride is bound at residue Asp-110. Residues 127–149 are Cytoplasmic-facing; that stretch reads DRYTAVVMPVHYQHGTGQSSCRR. The helical transmembrane segment at 150-170 threads the bilayer; that stretch reads VALMITAVWVLAFAVSCPLLF. Residues 171–187 are Extracellular-facing; sequence GFNTTGDPTVCSISNPD. N-linked (GlcNAc...) asparagine glycosylation is present at Asn-173. The chain crosses the membrane as a helical span at residues 188-209; that stretch reads FVIYSSVVSFYLPFGVTVLVYA. Over 210-329 the chain is Cytoplasmic; sequence RIYVVLKQRR…VPLREKKATQ (120 aa). The chain crosses the membrane as a helical span at residues 330-351; that stretch reads MVAIVLGAFIVCWLPFFLTHVL. Positions 345 and 349 each coordinate eticlopride. Over 352–366 the chain is Extracellular; it reads NTHCQTCHVSPELYS. Cysteines 355 and 358 form a disulfide. A helical membrane pass occupies residues 367–386; sequence ATTWLGYVNSALNPVIYTTF. At 387 to 400 the chain is on the cytoplasmic side; sequence NIEFRKAFLKILSC.

It belongs to the G-protein coupled receptor 1 family. In terms of assembly, interacts with CLIC6. Interacts with GRK4. Interacts with PALM. Interacts with FLNA (via filamin repeat 21); increases PKA-mediated phosphorylation of FLNA. In terms of processing, phosphorylated by GRK4 (GRK4-alpha and GRK4-gamma). Post-translationally, palmitoylated. Brain.

The protein localises to the cell membrane. Its function is as follows. Dopamine receptor whose activity is mediated by G proteins which inhibit adenylyl cyclase. Promotes cell proliferation. The sequence is that of D(3) dopamine receptor from Homo sapiens (Human).